The following is a 221-amino-acid chain: Probable septum site-determining protein MinC (221 aa).

This sequence belongs to the MinC family. Interacts with MinD and FtsZ.

Cell division inhibitor that blocks the formation of polar Z ring septums. Rapidly oscillates between the poles of the cell to destabilize FtsZ filaments that have formed before they mature into polar Z rings. Prevents FtsZ polymerization. In Shewanella woodyi (strain ATCC 51908 / MS32), this protein is Probable septum site-determining protein MinC.